The primary structure comprises 266 residues: Thiazole synthase (266 aa).

The active-site Schiff-base intermediate with DXP is the lysine 106. 1-deoxy-D-xylulose 5-phosphate is bound by residues glycine 167, 193–194 (AG), and 215–216 (NT).

It belongs to the ThiG family. Homotetramer. Forms heterodimers with either ThiH or ThiS.

The protein resides in the plastid. The protein localises to the chloroplast. The catalysed reaction is [ThiS sulfur-carrier protein]-C-terminal-Gly-aminoethanethioate + 2-iminoacetate + 1-deoxy-D-xylulose 5-phosphate = [ThiS sulfur-carrier protein]-C-terminal Gly-Gly + 2-[(2R,5Z)-2-carboxy-4-methylthiazol-5(2H)-ylidene]ethyl phosphate + 2 H2O + H(+). It participates in cofactor biosynthesis; thiamine diphosphate biosynthesis. Catalyzes the rearrangement of 1-deoxy-D-xylulose 5-phosphate (DXP) to produce the thiazole phosphate moiety of thiamine. Sulfur is provided by the thiocarboxylate moiety of the carrier protein ThiS. In vitro, sulfur can be provided by H(2)S. In Cyanidium caldarium (Red alga), this protein is Thiazole synthase.